The following is a 79-amino-acid chain: Ribonuclease P protein component 1 (79 aa).

Belongs to the eukaryotic/archaeal RNase P protein component 1 family. Consists of a catalytic RNA component and at least 4-5 protein subunits.

It is found in the cytoplasm. It carries out the reaction Endonucleolytic cleavage of RNA, removing 5'-extranucleotides from tRNA precursor.. Its function is as follows. Part of ribonuclease P, a protein complex that generates mature tRNA molecules by cleaving their 5'-ends. This is Ribonuclease P protein component 1 from Saccharolobus solfataricus (strain ATCC 35092 / DSM 1617 / JCM 11322 / P2) (Sulfolobus solfataricus).